The sequence spans 430 residues: POU domain, class 2, transcription factor 3 (430 aa).

Disordered stretches follow at residues 1–40 (MVNLEPMHTEIKMSGDVADSTDARSTFGQVESGNDRNGLD), 60–81 (HRPCHLSQGPTMMPGNQMSGDM), 129–180 (LLLP…EPTD), and 248–267 (DAESSPSDPSASTPSSYPTL). Polar residues-rich tracts occupy residues 23–32 (ARSTFGQVES) and 67–78 (QGPTMMPGNQMS). Over residues 129–139 (LLLPQTGPGLT) the composition is skewed to low complexity. In terms of domain architecture, POU-specific spans 176–250 (DEPTDLEELE…LLEKWLNDAE (75 aa)). A compositionally biased stretch (low complexity) spans 251–267 (SSPSDPSASTPSSYPTL). The homeobox DNA-binding region spans 274-333 (KRKKRTSIETNIRLTLEKRFQDNPKPSSEEISMIAEQLSMEKEVVRVWFCNRRQKEKRIN). 2 stretches are compositionally biased toward low complexity: residues 355–364 (SLGSLSVPPV) and 374–390 (SSCSPGNNSRPSSPGSG). Positions 355–413 (SLGSLSVPPVHSTMPGTVTSSCSPGNNSRPSSPGSGLHASSPTASQNNSKAAMNPSSAA) are disordered. Residues 392 to 413 (HASSPTASQNNSKAAMNPSSAA) show a composition bias toward polar residues.

The protein belongs to the POU transcription factor family. Class-2 subfamily. Interacts (via the POU domain) with POU2AF1 and POU2AF2 in a DNA-dependent manner; this interaction recruits POU2AF2 to chromatin and increases POU2F3 transactivation activity. In terms of tissue distribution, expressed in epidermis and hair follicles.

Its subcellular location is the nucleus. In terms of biological role, transcription factor that binds to the octamer motif (5'-ATTTGCAT-3') and regulates cell type-specific differentiation pathways. Involved in the regulation of keratinocytes differentiation. The POU2F3-POU2AF2/POU2AF3 complex drives the expression of tuft-cell-specific genes, a rare chemosensory cells that coordinate immune and neural functions within mucosal epithelial tissues. Inhibits transactivation by POU2F1. This Rattus norvegicus (Rat) protein is POU domain, class 2, transcription factor 3 (Pou2f3).